Reading from the N-terminus, the 321-residue chain is Biotin synthase (321 aa).

One can recognise a Radical SAM core domain in the interval phenylalanine 45–arginine 274. Positions 63, 67, and 70 each coordinate [4Fe-4S] cluster. Positions 139, 199, and 269 each coordinate [2Fe-2S] cluster.

Belongs to the radical SAM superfamily. Biotin synthase family. Homodimer. The cofactor is [4Fe-4S] cluster. [2Fe-2S] cluster is required as a cofactor.

It catalyses the reaction (4R,5S)-dethiobiotin + (sulfur carrier)-SH + 2 reduced [2Fe-2S]-[ferredoxin] + 2 S-adenosyl-L-methionine = (sulfur carrier)-H + biotin + 2 5'-deoxyadenosine + 2 L-methionine + 2 oxidized [2Fe-2S]-[ferredoxin]. It functions in the pathway cofactor biosynthesis; biotin biosynthesis; biotin from 7,8-diaminononanoate: step 2/2. Functionally, catalyzes the conversion of dethiobiotin (DTB) to biotin by the insertion of a sulfur atom into dethiobiotin via a radical-based mechanism. This chain is Biotin synthase, found in Pelotomaculum thermopropionicum (strain DSM 13744 / JCM 10971 / SI).